A 517-amino-acid polypeptide reads, in one-letter code: ADP-ribosylation factor GTPase-activating protein 3 (517 aa).

The Arf-GAP domain occupies 10–126; sequence LTIFKRLRSV…IKALASQATR (117 aa). A C4-type zinc finger spans residues 25–48; that stretch reads CFDCGAKNPSWASITYGVFLCIDC. A disordered region spans residues 139-200; sequence VPPSSPPPKE…EQGPSVEGLN (62 aa). The segment covering 159-176 has biased composition (polar residues); it reads EVSSTGWASAQPEPSLTP. Residue Ser-231 is modified to Phosphoserine. Positions 243–263 form a coiled coil; the sequence is NEIEKQAQAVDKMNAQEDLLS. Residues Ser-271 and Ser-275 each carry the phosphoserine modification. The span at 291–305 shows a compositional bias: basic and acidic residues; the sequence is EKMNMSGKKKAESER. 2 disordered regions span residues 291–349 and 362–422; these read EKMN…SDDS and MELR…QKKF. The span at 312–333 shows a compositional bias: polar residues; that stretch reads NSRSGISHSVTSDMQTIEQETP. A Phosphoserine modification is found at Ser-371. Positions 379-390 are enriched in basic and acidic residues; it reads YWKKETIKDTDP. A phosphoserine mark is found at Ser-429, Ser-452, Ser-454, Ser-456, Ser-458, and Ser-459.

It is found in the cytoplasm. The protein localises to the golgi apparatus membrane. Its activity is regulated as follows. GAP activity stimulated by phosphatidylinositol 4,5-bisphosphate (PIP2). Its function is as follows. GTPase-activating protein (GAP) for ADP ribosylation factor 1 (ARF1). Hydrolysis of ARF1-bound GTP may lead to dissociation of coatomer from Golgi-derived membranes to allow fusion with target membranes. The sequence is that of ADP-ribosylation factor GTPase-activating protein 3 from Bos taurus (Bovine).